The chain runs to 745 residues: Exocyst complex component 3 (745 aa).

Lys-28 bears the N6-acetyllysine mark.

The protein belongs to the SEC6 family. In terms of assembly, the exocyst complex is composed of EXOC1, EXOC2, EXOC3, EXOC4, EXOC5, EXOC6, EXOC7 and EXOC8. Interacts with EXOC3L1. Interacts with BIRC6/bruce. Interacts with MYRIP. Interacts with SLC6A9. In terms of tissue distribution, expressed in epididymis (at protein level).

Its subcellular location is the cytoplasm. It localises to the perinuclear region. The protein localises to the cell projection. The protein resides in the growth cone. It is found in the midbody. Its subcellular location is the golgi apparatus. It localises to the neuron projection. Functionally, component of the exocyst complex involved in the docking of exocytic vesicles with fusion sites on the plasma membrane. This is Exocyst complex component 3 (EXOC3) from Homo sapiens (Human).